The primary structure comprises 155 residues: MNQAELQRHMEEVSLQFFQKEFRHQAVFNARLRTTGGRYLLKSHNIEMNPKYLENFGLAYFIGIMKHELCHYHLHLEKKGYQHRDQDFRELLKKVDAPRFCATIPREITMHEYTCKSCGKSFLRQRRFNVNRYRCGSCGGKLIQTDSKKIYTENP.

The SprT-like domain maps to 7-145 (QRHMEEVSLQ…GSCGGKLIQT (139 aa)). Zn(2+) is bound at residue His-67. The active site involves Glu-68. His-71 lines the Zn(2+) pocket.

Belongs to the SprT family. It depends on Zn(2+) as a cofactor.

The protein localises to the cytoplasm. This Listeria monocytogenes serovar 1/2a (strain ATCC BAA-679 / EGD-e) protein is Protein SprT-like.